A 394-amino-acid polypeptide reads, in one-letter code: Elongation factor Tu (394 aa).

Residues 10 to 204 form the tr-type G domain; the sequence is KPHVNVGTIG…AMDDYIPAPE (195 aa). Positions 19-26 are G1; that stretch reads GHVDHGKT. 19–26 serves as a coordination point for GTP; the sequence is GHVDHGKT. Residue T26 coordinates Mg(2+). Positions 60-64 are G2; sequence GITIN. Residues 81–84 form a G3 region; it reads DCPG. GTP contacts are provided by residues 81 to 85 and 136 to 139; these read DCPGH and NKCD. The segment at 136-139 is G4; the sequence is NKCD. A G5 region spans residues 174–176; that stretch reads SAL.

The protein belongs to the TRAFAC class translation factor GTPase superfamily. Classic translation factor GTPase family. EF-Tu/EF-1A subfamily. Monomer.

The protein localises to the cytoplasm. The catalysed reaction is GTP + H2O = GDP + phosphate + H(+). Its function is as follows. GTP hydrolase that promotes the GTP-dependent binding of aminoacyl-tRNA to the A-site of ribosomes during protein biosynthesis. The chain is Elongation factor Tu from Francisella tularensis subsp. tularensis (strain FSC 198).